Here is a 160-residue protein sequence, read N- to C-terminus: MSETPKDQGPSSPSPSPSPSAASPMPLADNEVAGSGASSPNLPLTMSASVVLADLPRDATAALEAAGSFKTDKIVVRFKPVGSAPLLAQDVCKISATRRFEEVVRYLRKKLRCKETDSVFLYVNSAFAPSLDEVVGNLHQCFKNSHGQLVVAYSLTPAFG.

Residues 1–40 (MSETPKDQGPSSPSPSPSPSAASPMPLADNEVAGSGASSP) form a disordered region. G160 is covalently cross-linked (Glycyl lysine isopeptide (Gly-Lys) (interchain with K-102 in ATG5)).

The protein belongs to the ATG12 family. Forms a conjugate with ATG5. Forms a thioester bond with the 'Cys-196' of ATG10. Interacts with the ATG7 C-terminal 40 amino acids domain. The ATG12-ATG5 conjugate forms a complex with several units of ATG16. The ATG12-ATG5 conjugate also associates with ATG3.

It localises to the preautophagosomal structure membrane. In terms of biological role, ubiquitin-like protein involved in cytoplasm to vacuole transport (Cvt), autophagy vesicles formation, mitophagy, and nucleophagy. Conjugation with ATG5 through a ubiquitin-like conjugating system involving also ATG7 as an E1-like activating enzyme and ATG10 as an E2-like conjugating enzyme, is essential for its function. The ATG12-ATG5 conjugate acts as an E3-like enzyme which is required for lipidation of ATG8 and ATG8 association to the vesicle membranes. ATG12-ATG5 rearranges the ATG3 catalytic center and enhances its E2 activity. Autophagy is required for proper vegetative growth, asexual/sexual reproduction, and full virulence. Autophagy is particularly involved in the biosynthesis of deoxynivalenol (DON), an important virulence determinant. This chain is Ubiquitin-like protein ATG12, found in Gibberella zeae (strain ATCC MYA-4620 / CBS 123657 / FGSC 9075 / NRRL 31084 / PH-1) (Wheat head blight fungus).